Consider the following 807-residue polypeptide: uncharacterized protein (807 aa).

Positions Ile281 to Ile566 constitute a Reverse transcriptase domain.

Its subcellular location is the mitochondrion. This is an uncharacterized protein from Schizosaccharomyces pombe (strain 972 / ATCC 24843) (Fission yeast).